The primary structure comprises 518 residues: Integrator complex subunit 14 (518 aa).

One can recognise a VWFA domain in the interval 2–204; sequence PTVVVMDVSL…KNVQSMFGKL (203 aa). Residues Ser-10, Ser-12, and Thr-86 each contribute to the Mg(2+) site. The tract at residues 373–394 is disordered; it reads SDAKENPYGDDDNKSPFPLQPK. A compositionally biased stretch (basic and acidic residues) spans 374–386; it reads DAKENPYGDDDNK.

Belongs to the Integrator subunit 14 family. As to quaternary structure, component of the Integrator complex, composed of core subunits INTS1, INTS2, INTS3, INTS4, INTS5, INTS6, INTS7, INTS8, INTS9/RC74, INTS10, INTS11/CPSF3L, INTS12, INTS13, INTS14 and INTS15. The core complex associates with protein phosphatase 2A subunits PPP2CA and PPP2R1A, to form the Integrator-PP2A (INTAC) complex. INTS14 is part of the tail subcomplex, composed of INTS10, INTS13, INTS14 and INTS15.

The protein resides in the nucleus. Component of the integrator complex, a multiprotein complex that terminates RNA polymerase II (Pol II) transcription in the promoter-proximal region of genes. The integrator complex provides a quality checkpoint during transcription elongation by driving premature transcription termination of transcripts that are unfavorably configured for transcriptional elongation: the complex terminates transcription by (1) catalyzing dephosphorylation of the C-terminal domain (CTD) of Pol II subunit POLR2A/RPB1 and SUPT5H/SPT5, (2) degrading the exiting nascent RNA transcript via endonuclease activity and (3) promoting the release of Pol II from bound DNA. The integrator complex is also involved in terminating the synthesis of non-coding Pol II transcripts, such as enhancer RNAs (eRNAs), small nuclear RNAs (snRNAs), telomerase RNAs and long non-coding RNAs (lncRNAs). Within the integrator complex, INTS14 is part of the integrator tail module that acts as a platform for the recruitment of transcription factors at promoters. This chain is Integrator complex subunit 14, found in Gallus gallus (Chicken).